Consider the following 556-residue polypeptide: TNF receptor-associated factor 6-B (556 aa).

The segment at 72–111 adopts an RING-type; degenerate zinc-finger fold; it reads CPICLMALREAVQTPCGHRFCKACIVKSLRDAGHKCPVDN. TRAF-type zinc fingers lie at residues 152-204 and 205-261; these read RHLG…EDMS and GHEL…NDLA. The stretch at 318–356 forms a coiled coil; the sequence is SHQDCSQETRNLRETIEQLEGRLVRQDHQIRELIAKMET. The MATH domain occupies 384–533; the sequence is NGVFIWKIKG…NDTLFVRCAV (150 aa).

This sequence belongs to the TNF receptor-associated factor family. A subfamily. In terms of assembly, homotrimer. Homooligomer.

It localises to the cytoplasm. The protein localises to the cell cortex. The protein resides in the nucleus. Its subcellular location is the lipid droplet. It catalyses the reaction S-ubiquitinyl-[E2 ubiquitin-conjugating enzyme]-L-cysteine + [acceptor protein]-L-lysine = [E2 ubiquitin-conjugating enzyme]-L-cysteine + N(6)-ubiquitinyl-[acceptor protein]-L-lysine.. The protein operates within protein modification; protein ubiquitination. Functionally, E3 ubiquitin ligase that, together with UBE2N and UBE2V1, mediates the synthesis of 'Lys-63'-linked-polyubiquitin chains conjugated to proteins, such as IKBKG, IRAK1, AKT1 and AKT2. Also mediates ubiquitination of free/unanchored polyubiquitin chain that leads to MAP3K7 activation. The polypeptide is TNF receptor-associated factor 6-B (traf6-b) (Xenopus laevis (African clawed frog)).